A 254-amino-acid chain; its full sequence is uncharacterized protein (254 aa).

The stretch at 66–111 (DMVSEMNKRMDDLAARIVVLEDEKAELRRINQRLTEKVRDKDMEKA) forms a coiled coil.

This is an uncharacterized protein from Ostreid herpesvirus 1 (isolate France) (OsHV-1).